The primary structure comprises 677 residues: DNA ligase (677 aa).

Residues 32–36, 81–82, and glutamate 112 each bind NAD(+); these read DAQYD and SL. The active-site N6-AMP-lysine intermediate is lysine 114. The NAD(+) site is built by arginine 135, glutamate 171, lysine 288, and lysine 312. Zn(2+) is bound by residues cysteine 416, cysteine 419, cysteine 434, and cysteine 439. The 80-residue stretch at 598–677 folds into the BRCT domain; the sequence is NKNMPFSGME…REFINMLEQS (80 aa).

This sequence belongs to the NAD-dependent DNA ligase family. LigA subfamily. The cofactor is Mg(2+). It depends on Mn(2+) as a cofactor.

The catalysed reaction is NAD(+) + (deoxyribonucleotide)n-3'-hydroxyl + 5'-phospho-(deoxyribonucleotide)m = (deoxyribonucleotide)n+m + AMP + beta-nicotinamide D-nucleotide.. In terms of biological role, DNA ligase that catalyzes the formation of phosphodiester linkages between 5'-phosphoryl and 3'-hydroxyl groups in double-stranded DNA using NAD as a coenzyme and as the energy source for the reaction. It is essential for DNA replication and repair of damaged DNA. This chain is DNA ligase, found in Dehalococcoides mccartyi (strain CBDB1).